Consider the following 374-residue polypeptide: uncharacterized protein (374 aa).

A coiled-coil region spans residues 298–332 (TKEKLLKLHSEQKSLSEKINKLSGEKDIEQSMINN).

This is an uncharacterized protein from Acanthamoeba polyphaga (Amoeba).